The primary structure comprises 685 residues: Translation factor GUF1 homolog, mitochondrial (685 aa).

The transit peptide at 1-54 (MFSRLLNRGNGGVNKNITSGLLLRRTTTTTTRLSYINNSPTLSIRSFCSKSTTI) directs the protein to the mitochondrion. A tr-type G domain is found at 68-267 (DRIRNFSIIA…AVIDRIPPPQ (200 aa)). GTP contacts are provided by residues 77-84 (AHIDHGKT), 160-164 (DTPGH), and 214-217 (NKID).

This sequence belongs to the TRAFAC class translation factor GTPase superfamily. Classic translation factor GTPase family. LepA subfamily.

Its subcellular location is the mitochondrion inner membrane. It carries out the reaction GTP + H2O = GDP + phosphate + H(+). In terms of biological role, promotes mitochondrial protein synthesis. May act as a fidelity factor of the translation reaction, by catalyzing a one-codon backward translocation of tRNAs on improperly translocated ribosomes. Binds to mitochondrial ribosomes in a GTP-dependent manner. This is Translation factor GUF1 homolog, mitochondrial (guf1) from Dictyostelium discoideum (Social amoeba).